The sequence spans 410 residues: Argininosuccinate synthase (410 aa).

9–17 (AYSGGLDTS) provides a ligand contact to ATP. An L-citrulline-binding site is contributed by Tyr-86. An ATP-binding site is contributed by Gly-116. Thr-118, Asn-122, and Asp-123 together coordinate L-aspartate. Asn-122 is an L-citrulline binding site. Arg-126, Ser-174, Glu-259, and Tyr-271 together coordinate L-citrulline.

It belongs to the argininosuccinate synthase family. Type 1 subfamily. As to quaternary structure, homotetramer.

The protein resides in the cytoplasm. The enzyme catalyses L-citrulline + L-aspartate + ATP = 2-(N(omega)-L-arginino)succinate + AMP + diphosphate + H(+). It participates in amino-acid biosynthesis; L-arginine biosynthesis; L-arginine from L-ornithine and carbamoyl phosphate: step 2/3. This Limosilactobacillus reuteri (strain DSM 20016) (Lactobacillus reuteri) protein is Argininosuccinate synthase.